The primary structure comprises 122 residues: Large ribosomal subunit protein uL22 (122 aa).

The tract at residues 102–122 (VAEGKEMKSSKSHKKNQAEGK) is disordered.

This sequence belongs to the universal ribosomal protein uL22 family. In terms of assembly, part of the 50S ribosomal subunit.

In terms of biological role, this protein binds specifically to 23S rRNA; its binding is stimulated by other ribosomal proteins, e.g. L4, L17, and L20. It is important during the early stages of 50S assembly. It makes multiple contacts with different domains of the 23S rRNA in the assembled 50S subunit and ribosome. Its function is as follows. The globular domain of the protein is located near the polypeptide exit tunnel on the outside of the subunit, while an extended beta-hairpin is found that lines the wall of the exit tunnel in the center of the 70S ribosome. The protein is Large ribosomal subunit protein uL22 of Helicobacter pylori (strain ATCC 700392 / 26695) (Campylobacter pylori).